Consider the following 391-residue polypeptide: tRNA-specific 2-thiouridylase MnmA (391 aa).

Residues 20 to 27 and L46 each bind ATP; that span reads AMSGGVDS. C114 acts as the Nucleophile in catalysis. C114 and C210 are oxidised to a cystine. An ATP-binding site is contributed by G138. The segment at 160-162 is interaction with tRNA; the sequence is RDQ. C210 acts as the Cysteine persulfide intermediate in catalysis.

The protein belongs to the MnmA/TRMU family.

Its subcellular location is the cytoplasm. The catalysed reaction is S-sulfanyl-L-cysteinyl-[protein] + uridine(34) in tRNA + AH2 + ATP = 2-thiouridine(34) in tRNA + L-cysteinyl-[protein] + A + AMP + diphosphate + H(+). Functionally, catalyzes the 2-thiolation of uridine at the wobble position (U34) of tRNA, leading to the formation of s(2)U34. This Bartonella bacilliformis (strain ATCC 35685 / KC583 / Herrer 020/F12,63) protein is tRNA-specific 2-thiouridylase MnmA.